Consider the following 341-residue polypeptide: Uroporphyrinogen decarboxylase (341 aa).

Residues Arg-25–Arg-29, Phe-44, Asp-74, Tyr-151, Ser-206, and His-318 contribute to the substrate site.

The protein belongs to the uroporphyrinogen decarboxylase family. Homodimer.

It localises to the cytoplasm. It catalyses the reaction uroporphyrinogen III + 4 H(+) = coproporphyrinogen III + 4 CO2. It functions in the pathway porphyrin-containing compound metabolism; protoporphyrin-IX biosynthesis; coproporphyrinogen-III from 5-aminolevulinate: step 4/4. In terms of biological role, catalyzes the decarboxylation of four acetate groups of uroporphyrinogen-III to yield coproporphyrinogen-III. The sequence is that of Uroporphyrinogen decarboxylase from Christiangramia forsetii (strain DSM 17595 / CGMCC 1.15422 / KT0803) (Gramella forsetii).